The sequence spans 276 residues: Plant cysteine oxidase 2 (276 aa).

The interval 1–40 (MGTDTVMSGRVRKDLSKTNPNGNIPENRSNSRKKIQRRSK) is disordered. A compositionally biased stretch (polar residues) spans 17-28 (KTNPNGNIPENR). The segment covering 30 to 40 (NSRKKIQRRSK) has biased composition (basic residues). Fe cation-binding residues include His134, His136, and His197.

Belongs to the cysteine dioxygenase family. Requires Fe(2+) as cofactor.

It localises to the nucleus. The protein resides in the cytoplasm. It carries out the reaction L-cysteine + O2 = 3-sulfino-L-alanine + H(+). Its function is as follows. Catalyzes the oxidation of N-terminal cysteine residues (N-Cys), thus preparing the protein for N-end rule pathway-mediated proteasomal degradation, upstream of the N-end rule enzymes ATE1, ATE2 and PRT6. Controls the preparation of the group VII ethylene response factor (ERF-VII) proteins for degradation via the 26S proteasome N-end rule pathway. Acts as an oxygen sensor that controls the stability of ERF-VII proteins, which are stabilized in flooding-induced hypoxia, and regulate transcriptional adaptation to these adverse conditions. Not active on Cys located inside or at the C-terminus of a peptide. Acts redundantly with PCO1 to repress the anaerobic response. The polypeptide is Plant cysteine oxidase 2 (Arabidopsis thaliana (Mouse-ear cress)).